Reading from the N-terminus, the 299-residue chain is Putative KilA-N domain-containing protein R879 (299 aa).

The KilA-N domain occupies 1–75 (MKSDNGILMS…IKVSEIVLSY (75 aa)). A coiled-coil region spans residues 76–150 (HAKEAIKEKE…DKKINELLSK (75 aa)).

This chain is Putative KilA-N domain-containing protein R879, found in Acanthamoeba polyphaga mimivirus (APMV).